The primary structure comprises 630 residues: tRNA uridine 5-carboxymethylaminomethyl modification enzyme MnmG (630 aa).

Residues 13–18, valine 125, and serine 180 each bind FAD; that span reads GGGHAG. 273–287 provides a ligand contact to NAD(+); the sequence is GPRYCPSIEDKIHRF. Residue glutamine 370 participates in FAD binding.

It belongs to the MnmG family. As to quaternary structure, homodimer. Heterotetramer of two MnmE and two MnmG subunits. The cofactor is FAD.

It is found in the cytoplasm. Its function is as follows. NAD-binding protein involved in the addition of a carboxymethylaminomethyl (cmnm) group at the wobble position (U34) of certain tRNAs, forming tRNA-cmnm(5)s(2)U34. The polypeptide is tRNA uridine 5-carboxymethylaminomethyl modification enzyme MnmG (Shewanella woodyi (strain ATCC 51908 / MS32)).